A 168-amino-acid chain; its full sequence is G/U mismatch-specific DNA glycosylase (168 aa).

The protein belongs to the uracil-DNA glycosylase (UDG) superfamily. TDG/mug family. Binds DNA as a monomer.

Its subcellular location is the cytoplasm. The catalysed reaction is Specifically hydrolyzes mismatched double-stranded DNA and polynucleotides, releasing free uracil.. In terms of biological role, excises ethenocytosine and uracil, which can arise by alkylation or deamination of cytosine, respectively, from the corresponding mispairs with guanine in ds-DNA. It is capable of hydrolyzing the carbon-nitrogen bond between the sugar-phosphate backbone of the DNA and the mispaired base. The complementary strand guanine functions in substrate recognition. Required for DNA damage lesion repair in stationary-phase cells. The polypeptide is G/U mismatch-specific DNA glycosylase (Salmonella choleraesuis (strain SC-B67)).